Here is a 1369-residue protein sequence, read N- to C-terminus: Rho guanine nucleotide exchange factor 10 (1369 aa).

The disordered stretch occupies residues 1–106; that stretch reads MRPPGFLSRA…ETTPVAEPTK (106 aa). Residues 46 to 64 are compositionally biased toward acidic residues; it reads NNEEEEGEQFDFDSGDEIP. The span at 83 to 100 shows a compositional bias: low complexity; that stretch reads EAPAPTGGEDGAGAETTP. Ser180 carries the post-translational modification Phosphoserine. The disordered stretch occupies residues 184–254; the sequence is EAETPEVTED…ENSDSEPDEM (71 aa). Positions 196–209 are enriched in polar residues; the sequence is PNSLSSEEPPTSED. Positions 304 to 355 form a coiled coil; the sequence is KKQLSHDLTRLKEHYEKKMRDLMASTVGVVEIQQLRQKHELKMQKLVKAAKD. At Ser379 the chain carries Phosphoserine. The 188-residue stretch at 421–608 folds into the DH domain; the sequence is VRRYILGSVV…ETLAEKLNER (188 aa). Disordered stretches follow at residues 1226 to 1260 and 1277 to 1297; these read KDKS…LSQG and QKSD…SSSL. The segment covering 1279-1296 has biased composition (low complexity); sequence SDLSSSSGSLSLSHGSSS. Residue Ser1287 is modified to Phosphoserine. Gln1338 carries the post-translational modification N5-methylglutamine.

Methylated at Gln-1338 by N6AMT1.

Its function is as follows. May play a role in developmental myelination of peripheral nerves. The sequence is that of Rho guanine nucleotide exchange factor 10 (ARHGEF10) from Homo sapiens (Human).